Consider the following 338-residue polypeptide: RNA 3'-terminal phosphate cyclase (338 aa).

ATP-binding positions include Gln-103 and 283–287 (YLADQ). The active-site Tele-AMP-histidine intermediate is His-308.

The protein belongs to the RNA 3'-terminal cyclase family. Type 1 subfamily.

The protein resides in the cytoplasm. It carries out the reaction a 3'-end 3'-phospho-ribonucleotide-RNA + ATP = a 3'-end 2',3'-cyclophospho-ribonucleotide-RNA + AMP + diphosphate. Catalyzes the conversion of 3'-phosphate to a 2',3'-cyclic phosphodiester at the end of RNA. The mechanism of action of the enzyme occurs in 3 steps: (A) adenylation of the enzyme by ATP; (B) transfer of adenylate to an RNA-N3'P to produce RNA-N3'PP5'A; (C) and attack of the adjacent 2'-hydroxyl on the 3'-phosphorus in the diester linkage to produce the cyclic end product. The biological role of this enzyme is unknown but it is likely to function in some aspects of cellular RNA processing. This Escherichia coli O45:K1 (strain S88 / ExPEC) protein is RNA 3'-terminal phosphate cyclase.